Here is a 213-residue protein sequence, read N- to C-terminus: 5-deoxy-D-ribulose 1-phosphate aldolase (213 aa).

Substrate is bound by residues 28-29 (GN), 45-46 (SG), and 74-76 (SSE). Residue E76 is the Proton donor/acceptor of the active site. 4 residues coordinate Mn(2+): E76, H95, H97, and H157.

Belongs to the aldolase class II family. Forms homooligomers, possibly homotetramers. The cofactor is Mn(2+).

The catalysed reaction is 5-deoxy-D-ribulose 1-phosphate = dihydroxyacetone phosphate + acetaldehyde. It functions in the pathway carbohydrate degradation. Functionally, catalyzes the cleavage of 5-deoxy-D-ribulose 1-phosphate to yield dihydroxyacetone phosphate (DHAP) and acetaldehyde, as part of a 5-deoxyribose salvage pathway that recycles this toxic radical SAM enzyme by-product to mainstream metabolites. Is also able to catalyze the reverse reaction, using several aldehydes as substrate, with acetaldehyde being the preferred substrate. This Bacillus thuringiensis serovar kurstaki (strain ATCC 35866 / NRRL B-4488 / HD73) protein is 5-deoxy-D-ribulose 1-phosphate aldolase.